Consider the following 337-residue polypeptide: Receptor like protein kinase S.3 (337 aa).

In terms of domain architecture, Protein kinase spans 50-316 (FKESELFGTE…VNYLEGNDVL (267 aa)). ATP is bound by residues 56 to 64 (FGTEANGTV) and K78. Y123 is modified (phosphotyrosine). D171 (proton acceptor) is an active-site residue.

It belongs to the protein kinase superfamily. Ser/Thr protein kinase family.

The catalysed reaction is L-seryl-[protein] + ATP = O-phospho-L-seryl-[protein] + ADP + H(+). It catalyses the reaction L-threonyl-[protein] + ATP = O-phospho-L-threonyl-[protein] + ADP + H(+). In Arabidopsis thaliana (Mouse-ear cress), this protein is Receptor like protein kinase S.3 (LECRKS3).